The sequence spans 256 residues: Sugar fermentation stimulation protein homolog (256 aa).

The protein belongs to the SfsA family.

The protein is Sugar fermentation stimulation protein homolog of Prochlorococcus marinus (strain MIT 9211).